A 160-amino-acid chain; its full sequence is Transcription antitermination protein NusB (160 aa).

Belongs to the NusB family.

In terms of biological role, involved in transcription antitermination. Required for transcription of ribosomal RNA (rRNA) genes. Binds specifically to the boxA antiterminator sequence of the ribosomal RNA (rrn) operons. The chain is Transcription antitermination protein NusB from Chlamydia pneumoniae (Chlamydophila pneumoniae).